A 772-amino-acid polypeptide reads, in one-letter code: RNA exonuclease 5 (772 aa).

A compositionally biased stretch (basic and acidic residues) spans 1–10; sequence MEPEREGTER. A disordered region spans residues 1–26; the sequence is MEPEREGTERHPRKVRKRRQAPNKLV. Over residues 11–21 the composition is skewed to basic residues; it reads HPRKVRKRRQA. Residues 228–376 form the Exonuclease domain; that stretch reads LFGLDCEMCL…EDARIILELA (149 aa). RRM domains lie at 505 to 579 and 600 to 679; these read STVY…RPVT and GSIY…RHLH.

The chain is RNA exonuclease 5 (REXO5) from Macaca fascicularis (Crab-eating macaque).